A 256-amino-acid polypeptide reads, in one-letter code: Pimeloyl-[acyl-carrier protein] methyl ester esterase (256 aa).

An AB hydrolase-1 domain is found at 15 to 242 (HLVLLHGWGL…AAHAPFISHP (228 aa)). Substrate-binding positions include tryptophan 22, 82-83 (SL), and 143-147 (FLALQ). Residue serine 82 is the Nucleophile of the active site. Active-site residues include aspartate 207 and histidine 235. Histidine 235 is a substrate binding site.

This sequence belongs to the AB hydrolase superfamily. Carboxylesterase BioH family. As to quaternary structure, monomer.

It localises to the cytoplasm. It carries out the reaction 6-carboxyhexanoyl-[ACP] methyl ester + H2O = 6-carboxyhexanoyl-[ACP] + methanol + H(+). It participates in cofactor biosynthesis; biotin biosynthesis. Functionally, the physiological role of BioH is to remove the methyl group introduced by BioC when the pimeloyl moiety is complete. It allows to synthesize pimeloyl-ACP via the fatty acid synthetic pathway through the hydrolysis of the ester bonds of pimeloyl-ACP esters. This Shigella boydii serotype 18 (strain CDC 3083-94 / BS512) protein is Pimeloyl-[acyl-carrier protein] methyl ester esterase.